The primary structure comprises 40 residues: Photosystem II reaction center protein J (40 aa).

A helical membrane pass occupies residues 8–28 (IPLWIIGTVAGILVIGLIGIF).

This sequence belongs to the PsbJ family. In terms of assembly, PSII is composed of 1 copy each of membrane proteins PsbA, PsbB, PsbC, PsbD, PsbE, PsbF, PsbH, PsbI, PsbJ, PsbK, PsbL, PsbM, PsbT, PsbX, PsbY, PsbZ, Psb30/Ycf12, at least 3 peripheral proteins of the oxygen-evolving complex and a large number of cofactors. It forms dimeric complexes.

It is found in the plastid. The protein resides in the chloroplast thylakoid membrane. One of the components of the core complex of photosystem II (PSII). PSII is a light-driven water:plastoquinone oxidoreductase that uses light energy to abstract electrons from H(2)O, generating O(2) and a proton gradient subsequently used for ATP formation. It consists of a core antenna complex that captures photons, and an electron transfer chain that converts photonic excitation into a charge separation. In Nicotiana sylvestris (Wood tobacco), this protein is Photosystem II reaction center protein J.